The primary structure comprises 163 residues: Bacterial ISG15-like ubiquitin-like protein BilA (163 aa).

2 consecutive Ubiquitin-like BIL-type domains span residues L4–R80 and I81–G163. A Glycyl lysine isopeptide (Gly-Lys) (interchain with K-? in central tail fiber acceptor protein) cross-link involves residue G163.

In terms of biological role, component of the Bil (bacterial ISG15-like) antiviral defense system, composed of BilA, BilB, BilC and BilD. The Bil system specifically conjugates a ubiquitin-like moiety (bilA) to the bacteriophage central tail fiber (CTF, or tip attachment protein J) via reactions involving E1 (bilD) and E2 (bilB). Modifies CTF of phage SECphi27 and SECphi4, which probably interferes with assembly of the phage tail. Also modifies T5 baseplate hub protein pb3 (gene D16), but not gp27 of phage T6 (Bil defends against T6). Bil-encoding bacteria produce mostly defective phage SECphi27, many of which have phage assembly defects, including no tails. SECphi27 phage progeny produced in E.coli with the Bil system inject less DNA into naive host cells, maybe because the phage are less able to adsorb and inject their DNA into host cells. Its function is as follows. Expression of the Bil system in E.coli (strain MG1655) confers about 100-fold resistance to phage SECphi27, SECphi18, SECphi6, SECphi4 and T5, but not to SECphi17. When cells expressing the Bil system are infected by phage SECphi27 at low multiplicity of infection (0.03 MOI) the culture survives, at 3.0 MOI the culture collapses at the same time as cells without the Bil system. In Collimonas sp. (strain OK412), this protein is Bacterial ISG15-like ubiquitin-like protein BilA.